A 504-amino-acid polypeptide reads, in one-letter code: GTPase Der (504 aa).

An EngA-type G 1 domain is found at 3-166 (PVVALVGRPN…QVLAPLAEKL (164 aa)). Residues 9 to 16 (GRPNVGKS), 56 to 60 (DTGGI), and 118 to 121 (NKTD) contribute to the GTP site. Positions 171 to 190 (VDSDENVADDEQDEWDSDFD) are disordered. Acidic residues predominate over residues 172–190 (DSDENVADDEQDEWDSDFD). The region spanning 216-389 (IKIAIVGRPN…SIQEAYQCAT (174 aa)) is the EngA-type G 2 domain. GTP is bound by residues 222 to 229 (GRPNVGKS), 269 to 273 (DTAGV), and 334 to 337 (NKWD). Positions 390–474 (KKMTTSMLTR…PIRVLFQEGN (85 aa)) constitute a KH-like domain.

It belongs to the TRAFAC class TrmE-Era-EngA-EngB-Septin-like GTPase superfamily. EngA (Der) GTPase family. In terms of assembly, associates with the 50S ribosomal subunit.

In terms of biological role, GTPase that plays an essential role in the late steps of ribosome biogenesis. This chain is GTPase Der, found in Glaesserella parasuis serovar 5 (strain SH0165) (Haemophilus parasuis).